Consider the following 329-residue polypeptide: Beta-ketoacyl-[acyl-carrier-protein] synthase III (329 aa).

Catalysis depends on residues Cys-114 and His-254. Positions 255–259 (QANLR) are ACP-binding. Asn-284 is a catalytic residue.

The protein belongs to the thiolase-like superfamily. FabH family. As to quaternary structure, homodimer.

It is found in the cytoplasm. The catalysed reaction is malonyl-[ACP] + acetyl-CoA + H(+) = 3-oxobutanoyl-[ACP] + CO2 + CoA. Its pathway is lipid metabolism; fatty acid biosynthesis. Its function is as follows. Catalyzes the condensation reaction of fatty acid synthesis by the addition to an acyl acceptor of two carbons from malonyl-ACP. Catalyzes the first condensation reaction which initiates fatty acid synthesis and may therefore play a role in governing the total rate of fatty acid production. Possesses both acetoacetyl-ACP synthase and acetyl transacylase activities. Its substrate specificity determines the biosynthesis of branched-chain and/or straight-chain of fatty acids. This Roseiflexus sp. (strain RS-1) protein is Beta-ketoacyl-[acyl-carrier-protein] synthase III.